Consider the following 1377-residue polypeptide: DNA-directed RNA polymerase subunit beta (1377 aa).

Belongs to the RNA polymerase beta chain family. As to quaternary structure, the RNAP catalytic core consists of 2 alpha, 1 beta, 1 beta' and 1 omega subunit. When a sigma factor is associated with the core the holoenzyme is formed, which can initiate transcription.

It carries out the reaction RNA(n) + a ribonucleoside 5'-triphosphate = RNA(n+1) + diphosphate. In terms of biological role, DNA-dependent RNA polymerase catalyzes the transcription of DNA into RNA using the four ribonucleoside triphosphates as substrates. The polypeptide is DNA-directed RNA polymerase subunit beta (Brucella melitensis biotype 2 (strain ATCC 23457)).